A 640-amino-acid chain; its full sequence is Threonine--tRNA ligase (640 aa).

The 61-residue stretch at 1-61 (MPIITLPDGS…DRDATLQIIT (61 aa)) folds into the TGS domain. The catalytic stretch occupies residues 242-533 (DHRRIGKQLD…LIEHYAGAFP (292 aa)). Positions 333, 384, and 510 each coordinate Zn(2+).

This sequence belongs to the class-II aminoacyl-tRNA synthetase family. Homodimer. Zn(2+) is required as a cofactor.

The protein resides in the cytoplasm. The enzyme catalyses tRNA(Thr) + L-threonine + ATP = L-threonyl-tRNA(Thr) + AMP + diphosphate + H(+). Functionally, catalyzes the attachment of threonine to tRNA(Thr) in a two-step reaction: L-threonine is first activated by ATP to form Thr-AMP and then transferred to the acceptor end of tRNA(Thr). Also edits incorrectly charged L-seryl-tRNA(Thr). The polypeptide is Threonine--tRNA ligase (Pseudomonas aeruginosa (strain LESB58)).